The sequence spans 64 residues: Prokaryotic ubiquitin-like protein Pup (64 aa).

A disordered region spans residues 1 to 37; sequence MAQEQTKRGGGGGDDEDVTGTTAAGQERREKLAQDTD. The segment at 21–58 is ARC ATPase binding; sequence TTAAGQERREKLAQDTDDLLDEIDDVLEENAEDFVRAY. Positions 25–52 form a coiled coil; sequence GQERREKLAQDTDDLLDEIDDVLEENAE. Gln64 is subject to Deamidated glutamine. Residue Gln64 forms an Isoglutamyl lysine isopeptide (Gln-Lys) (interchain with K-? in acceptor proteins) linkage.

This sequence belongs to the prokaryotic ubiquitin-like protein family. As to quaternary structure, strongly interacts with the proteasome-associated ATPase ARC through a hydrophobic interface; the interacting region of Pup lies in its C-terminal half. There is one Pup binding site per ARC hexamer ring. Is modified by deamidation of its C-terminal glutamine to glutamate by the deamidase Dop, a prerequisite to the subsequent pupylation process.

The protein operates within protein degradation; proteasomal Pup-dependent pathway. In terms of biological role, protein modifier that is covalently attached to lysine residues of substrate proteins, thereby targeting them for proteasomal degradation. The tagging system is termed pupylation. The polypeptide is Prokaryotic ubiquitin-like protein Pup (Mycobacterium marinum (strain ATCC BAA-535 / M)).